The primary structure comprises 87 residues: Acyl-CoA-binding protein (87 aa).

Serine 2 bears the N-acetylserine mark. Residues serine 2 to isoleucine 87 form the ACB domain. Position 8 is an N6-acetyllysine; alternate (lysine 8). Position 8 is an N6-succinyllysine; alternate (lysine 8). Lysine 14 contacts an acyl-CoA. An N6-succinyllysine modification is found at lysine 17. Lysine 19 carries the post-translational modification N6-acetyllysine. Position 29 is a phosphotyrosine (tyrosine 29). An acyl-CoA-binding positions include tyrosine 29–lysine 33, lysine 51, lysine 55, and tyrosine 74. Residue lysine 51 is modified to N6-acetyllysine. Lysine 55 bears the N6-acetyllysine; alternate mark. Lysine 55 carries the N6-succinyllysine; alternate modification. The residue at position 55 (lysine 55) is an N6-(2-hydroxyisobutyryl)lysine; alternate. Lysine 55 bears the N6-malonyllysine; alternate mark. N6-acetyllysine; alternate is present on lysine 77. Lysine 77 is modified (N6-succinyllysine; alternate).

Belongs to the ACBP family. Monomer.

It localises to the endoplasmic reticulum. The protein resides in the golgi apparatus. Functionally, binds medium- and long-chain acyl-CoA esters with very high affinity and may function as an intracellular carrier of acyl-CoA esters. It is also able to displace diazepam from the benzodiazepine (BZD) recognition site located on the GABA type A receptor. It is therefore possible that this protein also acts as a neuropeptide to modulate the action of the GABA receptor. This chain is Acyl-CoA-binding protein (DBI), found in Oryctolagus cuniculus (Rabbit).